A 293-amino-acid chain; its full sequence is NAD kinase (293 aa).

D73 functions as the Proton acceptor in the catalytic mechanism. Residues 73 to 74 (DG), 147 to 148 (NE), H158, R175, D177, 188 to 193 (TAYSLS), and Q248 contribute to the NAD(+) site.

Belongs to the NAD kinase family. Requires a divalent metal cation as cofactor.

Its subcellular location is the cytoplasm. The catalysed reaction is NAD(+) + ATP = ADP + NADP(+) + H(+). Involved in the regulation of the intracellular balance of NAD and NADP, and is a key enzyme in the biosynthesis of NADP. Catalyzes specifically the phosphorylation on 2'-hydroxyl of the adenosine moiety of NAD to yield NADP. The protein is NAD kinase of Photobacterium profundum (strain SS9).